Consider the following 547-residue polypeptide: Chaperonin GroEL (547 aa).

Residues 29-32 (TLGP), 86-90 (DGTTT), Gly-413, 479-481 (NAA), and Asp-495 each bind ATP.

This sequence belongs to the chaperonin (HSP60) family. In terms of assembly, forms a cylinder of 14 subunits composed of two heptameric rings stacked back-to-back. Interacts with the co-chaperonin GroES.

It is found in the cytoplasm. The catalysed reaction is ATP + H2O + a folded polypeptide = ADP + phosphate + an unfolded polypeptide.. Its function is as follows. Together with its co-chaperonin GroES, plays an essential role in assisting protein folding. The GroEL-GroES system forms a nano-cage that allows encapsulation of the non-native substrate proteins and provides a physical environment optimized to promote and accelerate protein folding. In Synechococcus sp. (strain RCC307), this protein is Chaperonin GroEL.